A 123-amino-acid chain; its full sequence is Large ribosomal subunit protein bL12 (123 aa).

It belongs to the bacterial ribosomal protein bL12 family. Homodimer. Part of the ribosomal stalk of the 50S ribosomal subunit. Forms a multimeric L10(L12)X complex, where L10 forms an elongated spine to which 2 to 4 L12 dimers bind in a sequential fashion. Binds GTP-bound translation factors.

In terms of biological role, forms part of the ribosomal stalk which helps the ribosome interact with GTP-bound translation factors. Is thus essential for accurate translation. The protein is Large ribosomal subunit protein bL12 of Albidiferax ferrireducens (strain ATCC BAA-621 / DSM 15236 / T118) (Rhodoferax ferrireducens).